Here is a 418-residue protein sequence, read N- to C-terminus: UDP-N-acetylglucosamine 1-carboxyvinyltransferase (418 aa).

22 to 23 serves as a coordination point for phosphoenolpyruvate; it reads KN. R93 is a binding site for UDP-N-acetyl-alpha-D-glucosamine. The active-site Proton donor is C117. C117 is subject to 2-(S-cysteinyl)pyruvic acid O-phosphothioketal. UDP-N-acetyl-alpha-D-glucosamine contacts are provided by D306 and I328.

It belongs to the EPSP synthase family. MurA subfamily.

Its subcellular location is the cytoplasm. The catalysed reaction is phosphoenolpyruvate + UDP-N-acetyl-alpha-D-glucosamine = UDP-N-acetyl-3-O-(1-carboxyvinyl)-alpha-D-glucosamine + phosphate. The protein operates within cell wall biogenesis; peptidoglycan biosynthesis. Functionally, cell wall formation. Adds enolpyruvyl to UDP-N-acetylglucosamine. The protein is UDP-N-acetylglucosamine 1-carboxyvinyltransferase of Hydrogenovibrio crunogenus (strain DSM 25203 / XCL-2) (Thiomicrospira crunogena).